We begin with the raw amino-acid sequence, 64 residues long: Large ribosomal subunit protein bL28 (64 aa).

The protein belongs to the bacterial ribosomal protein bL28 family.

The chain is Large ribosomal subunit protein bL28 from Campylobacter lari (strain RM2100 / D67 / ATCC BAA-1060).